The following is a 291-amino-acid chain: Small ribosomal subunit biogenesis GTPase RsgA 2 (291 aa).

Residues E63–I221 enclose the CP-type G domain. Residues S112–D115 and G164–T172 contribute to the GTP site. The Zn(2+) site is built by C245, C250, H252, and C258.

Belongs to the TRAFAC class YlqF/YawG GTPase family. RsgA subfamily. As to quaternary structure, monomer. Associates with 30S ribosomal subunit, binds 16S rRNA. The cofactor is Zn(2+).

It localises to the cytoplasm. One of several proteins that assist in the late maturation steps of the functional core of the 30S ribosomal subunit. Helps release RbfA from mature subunits. May play a role in the assembly of ribosomal proteins into the subunit. Circularly permuted GTPase that catalyzes slow GTP hydrolysis, GTPase activity is stimulated by the 30S ribosomal subunit. The polypeptide is Small ribosomal subunit biogenesis GTPase RsgA 2 (Listeria monocytogenes serovar 1/2a (strain ATCC BAA-679 / EGD-e)).